Reading from the N-terminus, the 327-residue chain is Dipeptide transport ATP-binding protein DppF (327 aa).

Residues 12–261 enclose the ABC transporter domain; the sequence is LNAIGLKKYY…PQHPYTKALL (250 aa). 54–61 lines the ATP pocket; sequence GESGCGKS.

It belongs to the ABC transporter superfamily.

It localises to the cell inner membrane. The enzyme catalyses a dipeptide(out) + ATP + H2O = a dipeptide(in) + ADP + phosphate + H(+). Its function is as follows. Part of the ABC transporter DppBCDF involved in dipeptide transport. Responsible for energy coupling to the transport system. In Haemophilus influenzae (strain ATCC 51907 / DSM 11121 / KW20 / Rd), this protein is Dipeptide transport ATP-binding protein DppF (dppF).